A 452-amino-acid polypeptide reads, in one-letter code: Probable cytosolic iron-sulfur protein assembly protein 1 (452 aa).

The segment covering 1–12 (MPPPTTPTPNPS) has biased composition (pro residues). A disordered region spans residues 1-24 (MPPPTTPTPNPSIPQKATLTPLPP). WD repeat units follow at residues 70-121 (GHAR…DAAA), 161-200 (GHEN…QGGD), 213-267 (EHDG…EWVC), 273-319 (GHGG…FGGV), 340-379 (VHTR…EDVA), and 411-452 (YEVN…VRIS).

The protein belongs to the WD repeat CIA1 family.

Essential component of the cytosolic iron-sulfur (Fe/S) protein assembly machinery. Required for the maturation of extramitochondrial Fe/S proteins. In Chaetomium globosum (strain ATCC 6205 / CBS 148.51 / DSM 1962 / NBRC 6347 / NRRL 1970) (Soil fungus), this protein is Probable cytosolic iron-sulfur protein assembly protein 1.